We begin with the raw amino-acid sequence, 134 residues long: Small ribosomal subunit protein uS11 (134 aa).

This sequence belongs to the universal ribosomal protein uS11 family. As to quaternary structure, part of the 30S ribosomal subunit. Interacts with proteins S7 and S18. Binds to IF-3.

Located on the platform of the 30S subunit, it bridges several disparate RNA helices of the 16S rRNA. Forms part of the Shine-Dalgarno cleft in the 70S ribosome. The polypeptide is Small ribosomal subunit protein uS11 (Delftia acidovorans (strain DSM 14801 / SPH-1)).